A 37-amino-acid polypeptide reads, in one-letter code: Cytochrome b6-f complex subunit 5 (37 aa).

A helical membrane pass occupies residues Leu-5–Ala-25.

The protein belongs to the PetG family. As to quaternary structure, the 4 large subunits of the cytochrome b6-f complex are cytochrome b6, subunit IV (17 kDa polypeptide, PetD), cytochrome f and the Rieske protein, while the 4 small subunits are PetG, PetL, PetM and PetN. The complex functions as a dimer.

The protein localises to the plastid. It localises to the chloroplast thylakoid membrane. In terms of biological role, component of the cytochrome b6-f complex, which mediates electron transfer between photosystem II (PSII) and photosystem I (PSI), cyclic electron flow around PSI, and state transitions. PetG is required for either the stability or assembly of the cytochrome b6-f complex. This Tupiella akineta (Green alga) protein is Cytochrome b6-f complex subunit 5.